A 230-amino-acid polypeptide reads, in one-letter code: uncharacterized protein (230 aa).

The interval 118-195 (LLDEILPKEP…SKREMERLER (78 aa)) is disordered. The span at 136–146 (QKKKEKRAALK) shows a compositional bias: basic residues. Basic and acidic residues-rich tracts occupy residues 160–170 (ETDLYGDRDSF) and 179–195 (QRSE…RLER).

This is an uncharacterized protein from Schizosaccharomyces pombe (strain 972 / ATCC 24843) (Fission yeast).